The primary structure comprises 328 residues: WUSCHEL-related homeobox 6 (328 aa).

Polar residues predominate over residues 1–11; the sequence is MEGSSNSPDRQ. The tract at residues 1-45 is disordered; it reads MEGSSNSPDRQSSGGSPPEERGGGGSGGGGGRSAAGEPVRSRWTP. Over residues 23 to 33 the composition is skewed to gly residues; the sequence is GGGSGGGGGRS. The homeobox; WUS-type DNA-binding region spans 38 to 102; that stretch reads PVRSRWTPKP…NRRSRSRRRQ (65 aa).

It belongs to the WUS homeobox family.

It localises to the nucleus. Functionally, transcription factor which may be involved in developmental processes. The sequence is that of WUSCHEL-related homeobox 6 (WOX6) from Oryza sativa subsp. indica (Rice).